Consider the following 646-residue polypeptide: RNase E specificity factor CsrD (646 aa).

2 consecutive transmembrane segments (helical) span residues 10–30 (FVTLLTGLTIFVTLLGCSLSF) and 135–155 (MTTAPLTGAIGFIIVMLFLAV). An HAMP-like region spans residues 152–219 (FLAVRWLQRQ…REQHSRLDTL (68 aa)). A coiled-coil region spans residues 194–224 (RTSSALDTLLREIQNAREQHSRLDTLIRSYA). The GGDEF domain occupies 254–387 (THGIVMMIRL…GGNSWAIYDD (134 aa)). The EAL domain maps to 396–644 (NVRWRTLIEQ…TNVKKYSQRY (249 aa)).

It localises to the cell membrane. Its function is as follows. Serves as a specificity factor required for RNase E-mediated decay of the small global regulatory RNAs CsrB and CsrC, it is probably not a nuclease. Nor does its activity involve c-di-GMP, despite its domain composition. Positively modulates motility gene expression, is also required for curli expression. The protein is RNase E specificity factor CsrD (csrD) of Escherichia coli (strain K12).